The following is a 303-amino-acid chain: N-acetylmuramic acid 6-phosphate etherase (303 aa).

In terms of domain architecture, SIS spans 61-224 (IVQAFQQGGR…TTASMILLGK (164 aa)). The active-site Proton donor is glutamate 89. Glutamate 120 is a catalytic residue.

Belongs to the GCKR-like family. MurNAc-6-P etherase subfamily. Homodimer.

It carries out the reaction N-acetyl-D-muramate 6-phosphate + H2O = N-acetyl-D-glucosamine 6-phosphate + (R)-lactate. Its pathway is amino-sugar metabolism; 1,6-anhydro-N-acetylmuramate degradation. It functions in the pathway amino-sugar metabolism; N-acetylmuramate degradation. The protein operates within cell wall biogenesis; peptidoglycan recycling. Functionally, specifically catalyzes the cleavage of the D-lactyl ether substituent of MurNAc 6-phosphate, producing GlcNAc 6-phosphate and D-lactate. Together with AnmK, is also required for the utilization of anhydro-N-acetylmuramic acid (anhMurNAc) either imported from the medium or derived from its own cell wall murein, and thus plays a role in cell wall recycling. In Haemophilus influenzae (strain ATCC 51907 / DSM 11121 / KW20 / Rd), this protein is N-acetylmuramic acid 6-phosphate etherase (murQ).